We begin with the raw amino-acid sequence, 544 residues long: Chaperonin GroEL 1 (544 aa).

Residues 30-33 (TLGP), K51, 87-91 (DGTTT), G415, 481-483 (DAL), and D497 contribute to the ATP site.

This sequence belongs to the chaperonin (HSP60) family. Forms a cylinder of 14 subunits composed of two heptameric rings stacked back-to-back. Interacts with the co-chaperonin GroES.

The protein resides in the cytoplasm. It catalyses the reaction ATP + H2O + a folded polypeptide = ADP + phosphate + an unfolded polypeptide.. Together with its co-chaperonin GroES, plays an essential role in assisting protein folding. The GroEL-GroES system forms a nano-cage that allows encapsulation of the non-native substrate proteins and provides a physical environment optimized to promote and accelerate protein folding. The sequence is that of Chaperonin GroEL 1 from Chlamydia caviae (strain ATCC VR-813 / DSM 19441 / 03DC25 / GPIC) (Chlamydophila caviae).